The chain runs to 347 residues: Melanoma-associated antigen B10 (347 aa).

Residues 1–18 (MPRGQKSKLRAREKRRQA) are compositionally biased toward basic residues. 2 disordered regions span residues 1-20 (MPRG…QARG) and 56-92 (GASN…QMEE). The segment covering 67–78 (AQSTSTSATAAS) has biased composition (low complexity). Basic and acidic residues predominate over residues 81–92 (RHPEGVNDQMEE). An MAGE domain is found at 111–310 (VDEKVIILVH…SEFSNWYTEA (200 aa)). A disordered region spans residues 328–347 (VSATAGARSKVKSSKSSQLQ).

The chain is Melanoma-associated antigen B10 (MAGEB10) from Homo sapiens (Human).